The sequence spans 98 residues: MANVQVIFVAYIAVIAFSMVYGDDYKPFGEHNSYYGCKKQTDEFCNKICKLHLAKKGGFCHQPAPFVELCKCLDIDYDNTYFLKAMEKQCPKLKGNVN.

The N-terminal stretch at 1-22 (MANVQVIFVAYIAVIAFSMVYG) is a signal peptide. The LCN-type CS-alpha/beta domain maps to 23–91 (DDYKPFGEHN…FLKAMEKQCP (69 aa)). 3 cysteine pairs are disulfide-bonded: cysteine 37–cysteine 60, cysteine 45–cysteine 70, and cysteine 49–cysteine 72.

The protein belongs to the long (3 C-C) scorpion toxin superfamily. In terms of assembly, homodimer; disulfide-linked or monomer (edited version) or heterodimer of an alpha chain (AC B8XH01) and this beta chain (non-edited version). In terms of tissue distribution, expressed by the venom gland.

The protein localises to the secreted. Its function is as follows. The homodimer inhibits HMG-CoA reductase (HMGCR) (32% of inhibition produced by 0.6 uM), a glycoprotein involved in the control of cholesterol biosynthesis. The inhibitory effects of bumarsin are seen at much lower concentrations (0.6 uM) than that for statins such as atorvastatin (5 mM) and simvastatin (10 uM). In addition to inhibition of HMG-CoA reductase, this protein lowers cholesterol levels by inducing steroid hormone synthesis via StAR, and by increasing reverse cholesterol transport mediated by the induction of ABCA1 and APOA1. The heterodimer non-edited LVP1 induces lipolysis in rat adipocytes. Induction of lipolysis by LVP1 appears to be mediated through the beta-2 adrenergic receptor pathway (ADRB2). Functionally, the monomer edited version, similar to alpha-toxins, may modulate voltage-gated sodium channels (Nav) and may block voltage-gated potassium channels (Kv). This is Lipolysis-activating peptide 1-beta chain from Buthus israelis (Israeli scorpion).